Reading from the N-terminus, the 2771-residue chain is Kinesin-like protein KIN-12D (2771 aa).

2 stretches are compositionally biased toward basic and acidic residues: residues 1-13 and 40-54; these read MSKE…RDSD and KNPK…DRTP. 2 disordered regions span residues 1 to 73 and 117 to 139; these read MSKE…TPDK and YSET…GSCY. A compositionally biased stretch (polar residues) spans 118 to 131; that stretch reads SETNSTQNTPTKSV. Residues 193-530 enclose the Kinesin motor domain; it reads NVQILIRVRP…LKFAQRAKLI (338 aa). 274–281 provides a ligand contact to ATP; that stretch reads GQTGSGKT. 3 microtubules-binding regions span residues 400-404, 431-437, and 479-483; these read SSRSH, VDLAGSE, and HIPYR. 5 coiled-coil regions span residues 1033 to 1110, 1267 to 1331, 1410 to 1505, 2108 to 2390, and 2512 to 2677; these read AATA…NEME, ELKQ…MKEK, IILL…YVEN, ELED…EQVK, and RERD…LAQE. Basic residues predominate over residues 2727–2736; that stretch reads LKGKAKSRRS. The tract at residues 2727–2771 is disordered; it reads LKGKAKSRRSRNPERKMPSMPSPRRSWSQSPRSMSQVPFFSSLDR. Low complexity predominate over residues 2744–2762; the sequence is PSMPSPRRSWSQSPRSMSQ.

This sequence belongs to the TRAFAC class myosin-kinesin ATPase superfamily. Kinesin family. KIN-12 subfamily. In terms of tissue distribution, expressed in tissues enriched in dividing cells, such as root meristems, root primordia, and leaf primordia/young leaves.

The protein resides in the cytoplasm. The protein localises to the cytoskeleton. Its subcellular location is the phragmoplast. In terms of biological role, involved in the spatial control of cytokinesis by a proper phragmoplast guidance. This is Kinesin-like protein KIN-12D from Arabidopsis thaliana (Mouse-ear cress).